We begin with the raw amino-acid sequence, 82 residues long: Modifier of protein aggregation 4 (82 aa).

Positions 1-23 are enriched in basic and acidic residues; it reads MTRGNQRDLAREKNQKKLADQKK. Disordered stretches follow at residues 1–41 and 63–82; these read MTRG…MDAR and EAAAAAANAKKVAKVDPLKM.

The protein belongs to the SERF family.

It is found in the cytoplasm. The protein localises to the cytosol. It localises to the nucleus. Positive regulator of protein aggregation and age-related proteotoxicity. Induces conformational changes in aggregation-prone proteins, driving them into compact formations preceding the formation of aggregates. In Caenorhabditis elegans, this protein is Modifier of protein aggregation 4.